The following is a 690-amino-acid chain: Methionine--tRNA ligase (690 aa).

Positions 12–22 (PYANGSIHLGH) match the 'HIGH' region motif. Positions 143, 146, 156, and 159 each coordinate Zn(2+). The 'KMSKS' region signature appears at 328–332 (KMSKS). K331 is a binding site for ATP. In terms of domain architecture, tRNA-binding spans 582-690 (DFAKVDLRIA…SGAEPGMKVK (109 aa)).

This sequence belongs to the class-I aminoacyl-tRNA synthetase family. MetG type 1 subfamily. In terms of assembly, homodimer. Zn(2+) serves as cofactor.

Its subcellular location is the cytoplasm. The enzyme catalyses tRNA(Met) + L-methionine + ATP = L-methionyl-tRNA(Met) + AMP + diphosphate. Functionally, is required not only for elongation of protein synthesis but also for the initiation of all mRNA translation through initiator tRNA(fMet) aminoacylation. In Thiobacillus denitrificans (strain ATCC 25259 / T1), this protein is Methionine--tRNA ligase.